A 176-amino-acid polypeptide reads, in one-letter code: Pituitary adenylate cyclase-activating polypeptide (176 aa).

An N-terminal signal peptide occupies residues 1–24 (MTMCSGARLALLVYGIIMHSSVYS). A propeptide spanning residues 25–79 (SPAAAGLRFPGIRPEEEAYGEDGNPLPDFDGSEPPGAGSPASAPRAAAAWYRPAG) is cleaved from the precursor. The segment at 39 to 68 (EEEAYGEDGNPLPDFDGSEPPGAGSPASAP) is disordered. The segment covering 56–68 (SEPPGAGSPASAP) has biased composition (low complexity). Residues 150–158 (VKKYLAAVL) are important for receptor binding. Leu-158 bears the Leucine amide mark. Residue Lys-169 is modified to Lysine amide. A propeptide spanning residues 173–176 (IAYL) is cleaved from the precursor.

It belongs to the glucagon family.

It is found in the secreted. In terms of biological role, PACAP is a neuropeptide involved in diverse array of physiological processes through activating the PACAP subfamily of class B1 G protein-coupled receptors: VIP receptor 1 (VIPR1), VIP receptor 2 (VIPR2), and PACAP type I receptor (ADCYAP1R1). Exerts neuroprotective and general cytoprotective effects due to anti-apoptotic, anti-inflammatory, and antioxidant actions. Promotes neuron projection development through the RAPGEF2/Rap1/B-Raf/ERK pathway. In chromaffin cells, induces long-lasting increase of intracellular calcium concentrations and neuroendocrine secretion. Involved in the control of glucose homeostasis, induces insulin secretion by pancreatic beta cells. PACAP exists in two bioactive forms from proteolysis of the same precursor protein, PACAP27 and PACAP38, which differ by eleven amino acid residues in the C-terminus. The sequence is that of Pituitary adenylate cyclase-activating polypeptide from Homo sapiens (Human).